An 83-amino-acid chain; its full sequence is uncharacterized protein (83 aa).

3 consecutive transmembrane segments (helical) span residues 7–26 (FARFVEYSFFAVFAALIVSY), 36–58 (LSPLLVFLLTLIPAIGLILILPF), and 65–82 (ILTVAVLIEMAVALYLAF).

It is found in the cell membrane. This is an uncharacterized protein from Archaeoglobus fulgidus (strain ATCC 49558 / DSM 4304 / JCM 9628 / NBRC 100126 / VC-16).